The following is a 415-amino-acid chain: Squalene synthase 12 (415 aa).

2 consecutive transmembrane segments (helical) span residues 281–301 and 391–411; these read AIFRFCAIPQIMAIGTLALCF and LIAIIFIILAILYAYLSSNLL.

The protein belongs to the phytoene/squalene synthase family. Requires Mg(2+) as cofactor. Mn(2+) is required as a cofactor.

It is found in the endoplasmic reticulum membrane. It carries out the reaction 2 (2E,6E)-farnesyl diphosphate + NADH + H(+) = squalene + 2 diphosphate + NAD(+). The enzyme catalyses 2 (2E,6E)-farnesyl diphosphate + NADPH + H(+) = squalene + 2 diphosphate + NADP(+). It participates in terpene metabolism; lanosterol biosynthesis; lanosterol from farnesyl diphosphate: step 1/3. Functionally, component of the triterpene saponins (e.g. ginsenosides or panaxosides) and phytosterols biosynthetic pathways. Catalyzes the biosynthesis of squalene. This is Squalene synthase 12 from Panax ginseng (Korean ginseng).